The following is a 360-amino-acid chain: Phenylalanine--tRNA ligase alpha subunit (360 aa).

Glu-260 serves as a coordination point for Mg(2+).

It belongs to the class-II aminoacyl-tRNA synthetase family. Phe-tRNA synthetase alpha subunit type 1 subfamily. Tetramer of two alpha and two beta subunits. Mg(2+) is required as a cofactor.

It localises to the cytoplasm. It catalyses the reaction tRNA(Phe) + L-phenylalanine + ATP = L-phenylalanyl-tRNA(Phe) + AMP + diphosphate + H(+). This chain is Phenylalanine--tRNA ligase alpha subunit, found in Cereibacter sphaeroides (strain ATCC 17029 / ATH 2.4.9) (Rhodobacter sphaeroides).